The following is a 158-amino-acid chain: Osmosensory protein A (158 aa).

Residue T2 is modified to Phosphothreonine; by PknD. An STAS domain is found at 28–139 (AQIRAYLHHL…RSVHKALHDL (112 aa)).

The protein belongs to the anti-sigma-factor antagonist family. In terms of assembly, interacts with Rv2638. Phosphorylation abolishes binding to Rv2638. Phosphorylated on Thr-2 by the serine/threonine-protein kinase PknD. Also phosphorylated to a lesser extent by PknB and PknE. Dephosphorylated by PstP.

Its activity is regulated as follows. Regulated by PknD under osmotic stress. Its function is as follows. Part of a signaling pathway that enables adaptation to osmotic stress through cell wall remodeling and virulence factor production. Unphosphorylated OprA forms a complex with the anti-anti-sigma-factor paralog Rv2638 that dissociates on OprA phosphorylation by PknD. Phosphorylation of OprA may stimulate the release of SigF from an inhibitory complex and enable the transcription of osmotically regulated genes, such as oprA and the ESX-1-associated virulence factor espA. The chain is Osmosensory protein A from Mycobacterium tuberculosis (strain ATCC 25618 / H37Rv).